A 102-amino-acid polypeptide reads, in one-letter code: NADH-quinone oxidoreductase subunit K (102 aa).

3 consecutive transmembrane segments (helical) span residues 5 to 25, 31 to 51, and 66 to 86; these read IMHY…GIFL, IIIL…FVAF, and FILT…VVFF.

It belongs to the complex I subunit 4L family. NDH-1 is composed of 14 different subunits. Subunits NuoA, H, J, K, L, M, N constitute the membrane sector of the complex.

Its subcellular location is the cell inner membrane. The catalysed reaction is a quinone + NADH + 5 H(+)(in) = a quinol + NAD(+) + 4 H(+)(out). Functionally, NDH-1 shuttles electrons from NADH, via FMN and iron-sulfur (Fe-S) centers, to quinones in the respiratory chain. The immediate electron acceptor for the enzyme in this species is believed to be ubiquinone. Couples the redox reaction to proton translocation (for every two electrons transferred, four hydrogen ions are translocated across the cytoplasmic membrane), and thus conserves the redox energy in a proton gradient. The chain is NADH-quinone oxidoreductase subunit K from Bartonella henselae (strain ATCC 49882 / DSM 28221 / CCUG 30454 / Houston 1) (Rochalimaea henselae).